The sequence spans 365 residues: Putative tRNA 2'-phosphotransferase (365 aa).

2 disordered regions span residues 1-35 (MYKN…IRPR) and 231-254 (LLDA…PESI). The segment covering 17–27 (SGTPATKSSSK) has biased composition (low complexity).

Belongs to the KptA/TPT1 family.

The catalysed reaction is 2'-phospho-[ligated tRNA] + NAD(+) = mature tRNA + ADP-alpha-D-ribose 1'',2''-cyclic phosphate + nicotinamide. Catalyzes the last step of tRNA splicing, the transfer of the splice junction 2'-phosphate from ligated tRNA to NAD to produce ADP-ribose 1''-2'' cyclic phosphate. This chain is Putative tRNA 2'-phosphotransferase, found in Schizosaccharomyces pombe (strain 972 / ATCC 24843) (Fission yeast).